Consider the following 635-residue polypeptide: Biosynthetic arginine decarboxylase (635 aa).

K100 is subject to N6-(pyridoxal phosphate)lysine. 282–292 (VDIGGGLGVDY) serves as a coordination point for substrate.

Belongs to the Orn/Lys/Arg decarboxylase class-II family. SpeA subfamily. It depends on Mg(2+) as a cofactor. The cofactor is pyridoxal 5'-phosphate.

It catalyses the reaction L-arginine + H(+) = agmatine + CO2. It functions in the pathway amine and polyamine biosynthesis; agmatine biosynthesis; agmatine from L-arginine: step 1/1. Functionally, catalyzes the biosynthesis of agmatine from arginine. This Geobacter sulfurreducens (strain ATCC 51573 / DSM 12127 / PCA) protein is Biosynthetic arginine decarboxylase.